Here is a 220-residue protein sequence, read N- to C-terminus: Vesicle-associated membrane protein 7 (220 aa).

An N-acetylalanine modification is found at A2. Over 2-188 (AILFAVVARG…ARAMCMKNIK (187 aa)) the chain is Cytoplasmic. The 104-residue stretch at 7 to 110 (VVARGTTILA…AMNSEFSSVL (104 aa)) folds into the Longin domain. A v-SNARE coiled-coil homology domain is found at 125 to 185 (KVMETQAQVD…RNLARAMCMK (61 aa)). Phosphoserine is present on residues S167 and S168. Residues 189-209 (LTIIIIIVSIVFIYIIVSLLC) traverse the membrane as a helical; Anchor for type IV membrane protein segment. At 210–220 (GGFTWPNCVKK) the chain is on the vesicular side.

The protein belongs to the synaptobrevin family. In terms of assembly, component of the SNARE complex composed of STX4, SNAP23 and VAMP7 that binds SYT7 during lysosomal exocytosis. Component of the SNARE complex composed of STX7, STX8, VAMP7 and VTI1B that is required for heterotypic fusion of late endosomes with lysosomes. May interact with STX17. Interacts with PICALM. Interacts with RAB21.

The protein resides in the cytoplasmic vesicle. It is found in the secretory vesicle membrane. Its subcellular location is the golgi apparatus. It localises to the trans-Golgi network membrane. The protein localises to the late endosome membrane. The protein resides in the lysosome membrane. It is found in the endoplasmic reticulum membrane. Its subcellular location is the phagosome membrane. It localises to the synapse. The protein localises to the synaptosome. Involved in the targeting and/or fusion of transport vesicles to their target membrane during transport of proteins from the early endosome to the lysosome. Required for heterotypic fusion of late endosomes with lysosomes and homotypic lysosomal fusion. Required for calcium regulated lysosomal exocytosis. Involved in the export of chylomicrons from the endoplasmic reticulum to the cis Golgi. Required for exocytosis of mediators during eosinophil and neutrophil degranulation, and target cell killing by natural killer cells. Required for focal exocytosis of late endocytic vesicles during phagosome formation. The protein is Vesicle-associated membrane protein 7 (Vamp7) of Mus musculus (Mouse).